The primary structure comprises 341 residues: Glycerol-3-phosphate dehydrogenase [NAD(P)+] (341 aa).

Positions 15, 16, 36, and 110 each coordinate NADPH. Sn-glycerol 3-phosphate contacts are provided by lysine 110, glycine 139, and serine 141. Residue alanine 143 coordinates NADPH. Sn-glycerol 3-phosphate is bound by residues lysine 194, aspartate 247, serine 257, arginine 258, and asparagine 259. The Proton acceptor role is filled by lysine 194. Arginine 258 is an NADPH binding site. Valine 282 and glutamate 284 together coordinate NADPH.

This sequence belongs to the NAD-dependent glycerol-3-phosphate dehydrogenase family.

It is found in the cytoplasm. The catalysed reaction is sn-glycerol 3-phosphate + NAD(+) = dihydroxyacetone phosphate + NADH + H(+). The enzyme catalyses sn-glycerol 3-phosphate + NADP(+) = dihydroxyacetone phosphate + NADPH + H(+). It functions in the pathway membrane lipid metabolism; glycerophospholipid metabolism. Its function is as follows. Catalyzes the reduction of the glycolytic intermediate dihydroxyacetone phosphate (DHAP) to sn-glycerol 3-phosphate (G3P), the key precursor for phospholipid synthesis. In Stenotrophomonas maltophilia (strain K279a), this protein is Glycerol-3-phosphate dehydrogenase [NAD(P)+].